The sequence spans 307 residues: Transmembrane protein 200B (307 aa).

Residues 1–38 (MTAGSPEECGEVRRSPEGRVSRLGRRLGRRRRPRSPPE) are disordered. The span at 10-20 (GEVRRSPEGRV) shows a compositional bias: basic and acidic residues. Residues 22–34 (RLGRRLGRRRRPR) show a composition bias toward basic residues. The helical transmembrane segment at 53-73 (GAFAALGALVVLVGMGIAVAG) threads the bilayer. Residues 81–111 (APGSRAANASSPQMSELRREGRGGGRAHGPH) form a disordered region. N-linked (GlcNAc...) asparagine glycosylation occurs at Asn88. Positions 96 to 111 (ELRREGRGGGRAHGPH) are enriched in basic and acidic residues. Residues 116–136 (LLGPVIMGVGLFVFICANTLL) traverse the membrane as a helical segment. Residues 180 to 211 (AVGCAEPEIWDPSPRRGTSPVPSVRSLRSEPA) are disordered.

This sequence belongs to the TMEM200 family.

The protein resides in the membrane. The polypeptide is Transmembrane protein 200B (TMEM200B) (Homo sapiens (Human)).